The following is a 280-amino-acid chain: Gastrula zinc finger protein XlCGF46.1 (280 aa).

10 consecutive C2H2-type zinc fingers follow at residues 6–28, 34–56, 62–84, 90–112, 118–140, 146–168, 174–196, 202–224, 230–252, and 258–280; these read FACK…KLMH, FECT…QLIH, FVCP…LLCH, FTCK…KLTH, FICS…QLIH, YVCT…LRTH, FKCE…KVTH, FTCE…QLTH, FKCE…QRFH, and YKCN…ELSH.

The protein belongs to the krueppel C2H2-type zinc-finger protein family.

It localises to the nucleus. Its function is as follows. May be involved in transcriptional regulation. This chain is Gastrula zinc finger protein XlCGF46.1, found in Xenopus laevis (African clawed frog).